The chain runs to 142 residues: Hemoglobin subunit alpha (142 aa).

The 141-residue stretch at 2–142 folds into the Globin domain; the sequence is VLSAADKGNV…VSTVLTSKYR (141 aa). Serine 4 carries the phosphoserine modification. 2 positions are modified to N6-succinyllysine: lysine 8 and lysine 12. At lysine 17 the chain carries N6-acetyllysine; alternate. At lysine 17 the chain carries N6-succinyllysine; alternate. At tyrosine 25 the chain carries Phosphotyrosine. Serine 36 is modified (phosphoserine). An N6-succinyllysine modification is found at lysine 41. Serine 50 carries the phosphoserine modification. Histidine 59 is a binding site for O2. Histidine 88 provides a ligand contact to heme b. Serine 103 bears the Phosphoserine mark. Threonine 109 carries the phosphothreonine modification. The residue at position 125 (serine 125) is a Phosphoserine. Phosphothreonine occurs at positions 135 and 138. A Phosphoserine modification is found at serine 139.

This sequence belongs to the globin family. In terms of assembly, heterotetramer of two alpha chains and two beta chains. In terms of tissue distribution, red blood cells.

In terms of biological role, involved in oxygen transport from the lung to the various peripheral tissues. Hemopressin acts as an antagonist peptide of the cannabinoid receptor CNR1. Hemopressin-binding efficiently blocks cannabinoid receptor CNR1 and subsequent signaling. This chain is Hemoglobin subunit alpha (HBA), found in Bos taurus (Bovine).